The primary structure comprises 383 residues: Chaperone protein DnaJ (383 aa).

The region spanning 5–70 (DYYELLGVEK…QKRAAYDRFG (66 aa)) is the J domain. The CR-type zinc finger occupies 137–215 (GKTATVKVPS…CGGSGRTRKE (79 aa)). Cys-150, Cys-153, Cys-167, Cys-170, Cys-189, Cys-192, Cys-203, and Cys-206 together coordinate Zn(2+). 4 CXXCXGXG motif repeats span residues 150 to 157 (CEDCKGTG), 167 to 174 (CSACHGHG), 189 to 196 (CPTCQGMG), and 203 to 210 (CRSCGGSG).

It belongs to the DnaJ family. In terms of assembly, homodimer. Zn(2+) serves as cofactor.

It localises to the cytoplasm. Participates actively in the response to hyperosmotic and heat shock by preventing the aggregation of stress-denatured proteins and by disaggregating proteins, also in an autonomous, DnaK-independent fashion. Unfolded proteins bind initially to DnaJ; upon interaction with the DnaJ-bound protein, DnaK hydrolyzes its bound ATP, resulting in the formation of a stable complex. GrpE releases ADP from DnaK; ATP binding to DnaK triggers the release of the substrate protein, thus completing the reaction cycle. Several rounds of ATP-dependent interactions between DnaJ, DnaK and GrpE are required for fully efficient folding. Also involved, together with DnaK and GrpE, in the DNA replication of plasmids through activation of initiation proteins. In Paramagnetospirillum magneticum (strain ATCC 700264 / AMB-1) (Magnetospirillum magneticum), this protein is Chaperone protein DnaJ.